Consider the following 60-residue polypeptide: Protein translocase subunit SecE (60 aa).

Residues 37–57 traverse the membrane as a helical segment; sequence LLGFALVGGIGYLIHLGYIIL.

It belongs to the SecE/SEC61-gamma family. As to quaternary structure, component of the Sec protein translocase complex. Heterotrimer consisting of SecY (alpha), SecG (beta) and SecE (gamma) subunits. The heterotrimers can form oligomers, although 1 heterotrimer is thought to be able to translocate proteins. Interacts with the ribosome. May interact with SecDF, and other proteins may be involved.

It localises to the cell membrane. Essential subunit of the Sec protein translocation channel SecYEG. Clamps together the 2 halves of SecY. May contact the channel plug during translocation. The sequence is that of Protein translocase subunit SecE from Aeropyrum pernix (strain ATCC 700893 / DSM 11879 / JCM 9820 / NBRC 100138 / K1).